The primary structure comprises 378 residues: Trans-enoyl reductase poxP (378 aa).

62 to 65 (CDWK) contacts NADP(+). Residue 151–158 (SVFATLWI) coordinates substrate. Residues 187–190 (STST), 210–213 (SPHN), Y228, and 275–276 (LE) each bind NADP(+). 295 to 299 (GLAAS) provides a ligand contact to substrate. 364 to 365 (TS) contacts NADP(+).

It belongs to the zinc-containing alcohol dehydrogenase family. In terms of assembly, monomer.

It participates in secondary metabolite biosynthesis. In terms of biological role, trans-enoyl reductase; part of the gene cluster that mediates the biosynthesis of oxaleimides, cytotoxic compounds containing an unusual disubstituted succinimide moiety. The first step of the pathway is provided by the HR-PKS poxF that serves in a new mode of collaborative biosynthesis with the PKS-NRPS poxE, by providing the olefin containing amino acid substrate via the synthesis of an ACP-bound dec-4-enoate. The cytochrome P450 monooxygenase poxM-catalyzed oxidation at the alpha-position creates the enzyme-bound 2-hydroxydec-4-enoyl-ACP thioester, which may be prone to spontaneous hydrolysis to yield 2-hydroxydec-4-enoic acid due to increased electrophilicity of the carbonyl. 2-hydroxydec-4-enoic acid can then be further oxidized by poxM to yield the alpha-ketoacid 2-oxodec-4-enoicacid, which is reductively aminated by the aminotransferase poxL to yield (S,E)-2-aminodec-4-enoic acid. The Hybrid PKS-NRPS synthetase poxE then performs condensation between the octaketide product of its PKS modules and the amino group of (S,E)-2-aminodec-4-enoic acid which is activated and incorporated by the adenylation domain. The resulting aminoacyl product can be cyclized by the Diels-Alderase PoxQ and reductively released by the reductive (R) domain of poxE to yield an aldehyde intermediate. The released aldehyde is then substrate for a Knoevenagel condensation by the hydrolyase poxO followed by an oxidation at the 5-position of the pyrrolidone ring. The presence of the olefin from the amino acid building block allows for migration of the substituted allyl group to occur. This allylic transposition reaction takes place in a conjugate addition, semipinacol-like fashion to yield a succinimide intermediate. Iterative two-electron oxidations of the C7 methyl of the succinimide intermediate to the carboxylic acid can be catalyzed by one of two remaining cytochrome P450 monooxygenasess poxC or poxD to yield oxaleimide A. Subsequent oxidation yields the maleimide scaffold oxaleimide I. Both oxaleimide A and oxaleimide I can undergo oxidative modifications in the decalin ring to yield the series of products oxaleimides B to H. This Penicillium oxalicum protein is Trans-enoyl reductase poxP.